Here is a 194-residue protein sequence, read N- to C-terminus: Peptidyl-tRNA hydrolase (194 aa).

A tRNA-binding site is contributed by tyrosine 17. The Proton acceptor role is filled by histidine 22. Phenylalanine 68, asparagine 70, and asparagine 116 together coordinate tRNA.

It belongs to the PTH family. As to quaternary structure, monomer.

The protein resides in the cytoplasm. It catalyses the reaction an N-acyl-L-alpha-aminoacyl-tRNA + H2O = an N-acyl-L-amino acid + a tRNA + H(+). Its function is as follows. Hydrolyzes ribosome-free peptidyl-tRNAs (with 1 or more amino acids incorporated), which drop off the ribosome during protein synthesis, or as a result of ribosome stalling. Functionally, catalyzes the release of premature peptidyl moieties from peptidyl-tRNA molecules trapped in stalled 50S ribosomal subunits, and thus maintains levels of free tRNAs and 50S ribosomes. This chain is Peptidyl-tRNA hydrolase, found in Pasteurella multocida (strain Pm70).